A 256-amino-acid chain; its full sequence is Type III pantothenate kinase (256 aa).

Residue 6–13 coordinates ATP; sequence DAGNSRIK. Substrate contacts are provided by residues Tyr-90 and 97–100; that span reads GSDR. The Proton acceptor role is filled by Asp-99. Thr-123 is a binding site for ATP. A substrate-binding site is contributed by Thr-187.

The protein belongs to the type III pantothenate kinase family. In terms of assembly, homodimer. NH4(+) serves as cofactor. Requires K(+) as cofactor.

The protein resides in the cytoplasm. It catalyses the reaction (R)-pantothenate + ATP = (R)-4'-phosphopantothenate + ADP + H(+). Its pathway is cofactor biosynthesis; coenzyme A biosynthesis; CoA from (R)-pantothenate: step 1/5. Functionally, catalyzes the phosphorylation of pantothenate (Pan), the first step in CoA biosynthesis. The sequence is that of Type III pantothenate kinase from Burkholderia mallei (strain NCTC 10247).